Consider the following 359-residue polypeptide: Peptide chain release factor 1 (359 aa).

At Gln-233 the chain carries N5-methylglutamine.

The protein belongs to the prokaryotic/mitochondrial release factor family. Post-translationally, methylated by PrmC. Methylation increases the termination efficiency of RF1.

The protein resides in the cytoplasm. Peptide chain release factor 1 directs the termination of translation in response to the peptide chain termination codons UAG and UAA. In Ruminiclostridium cellulolyticum (strain ATCC 35319 / DSM 5812 / JCM 6584 / H10) (Clostridium cellulolyticum), this protein is Peptide chain release factor 1.